Reading from the N-terminus, the 445-residue chain is Glycerophosphocholine choline phosphodiesterase ENPP6 (445 aa).

Residues 1–22 (MAGKLGVLLLALVLSLAQPASA) form the signal peptide. Substrate is bound by residues D32, S71, and N92. Residues D32 and S71 each coordinate Zn(2+). S71 serves as the catalytic Nucleophile. Phosphoserine is present on S71. N-linked (GlcNAc...) asparagine glycans are attached at residues N100 and N118. A disulfide bridge links C142 with C154. Position 193 (D193) interacts with substrate. Positions 193, 197, 240, and 241 each coordinate Zn(2+). Residue H241 participates in substrate binding. N341 carries N-linked (GlcNAc...) asparagine glycosylation. H356 lines the substrate pocket. Position 356 (H356) interacts with Zn(2+). N406 carries an N-linked (GlcNAc...) asparagine glycan. S421 carries GPI-anchor amidated serine lipidation. Positions 422–445 (SAPGAPPCACALVTVLLVLLAILA) are cleaved as a propeptide — removed in mature form.

The protein belongs to the nucleotide pyrophosphatase/phosphodiesterase family. Homodimer; disulfide-linked. Homotetramer. The cofactor is Zn(2+).

It is found in the cell membrane. The enzyme catalyses sn-glycerol 3-phosphocholine + H2O = phosphocholine + glycerol + H(+). The catalysed reaction is a 1-acyl-sn-glycero-3-phosphocholine + H2O = a 1-acyl-sn-glycerol + phosphocholine + H(+). It catalyses the reaction a 1-O-alkyl-sn-glycero-3-phosphocholine + H2O = a 1-O-alkyl-sn-glycerol + phosphocholine + H(+). It carries out the reaction 1-dodecanoyl-sn-glycero-3-phosphocholine + H2O = 1-dodecanoyl-sn-glycerol + phosphocholine + H(+). The enzyme catalyses 1-hexadecanoyl-sn-glycero-3-phosphocholine + H2O = 1-hexadecanoyl-sn-glycerol + phosphocholine + H(+). The catalysed reaction is 1-(5Z,8Z,11Z,14Z-eicosatetraenoyl)-sn-glycero-3-phosphocholine + H2O = 1-(5Z,8Z,11Z,14Z-eicosatetraenoyl)-sn-glycerol + phosphocholine + H(+). It catalyses the reaction 1-tetradecanoyl-sn-glycero-3-phosphocholine + H2O = 1-tetradecanoyl-sn-glycerol + phosphocholine + H(+). It carries out the reaction sphing-4-enine-phosphocholine + H2O = sphing-4-enine + phosphocholine + H(+). The enzyme catalyses 1-(9Z-octadecenoyl)-sn-glycero-3-phosphocholine + H2O = 1-(9Z-octadecenoyl)-sn-glycerol + phosphocholine + H(+). The catalysed reaction is 1-(9Z,12Z)-octadecadienoyl-sn-glycero-3-phosphocholine + H2O = 1-(9Z,12Z-octadecadienoyl)-sn-glycerol + phosphocholine + H(+). It catalyses the reaction glycero-2-phosphocholine + H2O = phosphocholine + glycerol + H(+). Inhibited by EDTA and EGTA in vitro. Choline-specific glycerophosphodiesterase that hydrolyzes glycerophosphocholine (GPC) and lysophosphatidylcholine (LPC) and contributes to supplying choline to the cells. Has a preference for LPC with short (12:0 and 14:0) or polyunsaturated (18:2 and 20:4) fatty acids. In vitro, hydrolyzes only choline-containing lysophospholipids, such as sphingosylphosphorylcholine (SPC), platelet-activating factor (PAF) and lysoPAF, but not other lysophospholipids. This is Glycerophosphocholine choline phosphodiesterase ENPP6 from Bos taurus (Bovine).